We begin with the raw amino-acid sequence, 511 residues long: U3 snoRNP-associated protein-like YAOH (511 aa).

The span at 1-18 shows a compositional bias: basic residues; sequence MAPRPRKRVSRPKPRATS. A disordered region spans residues 1–117; the sequence is MAPRPRKRVS…EDEDEGEEAG (117 aa). Acidic residues-rich tracts occupy residues 44-53 and 66-80; these read EDIESEDSDL and DDGEEEEEEEEEQET. Residues 81–105 are compositionally biased toward basic and acidic residues; the sequence is AGEKKMRIAKELLKKVTDAARRRRE. WD repeat units follow at residues 158–197, 217–256, 259–298, 301–339, 342–380, 412–451, and 457–497; these read KHRQPVTAVVLSKDSDKGFSASKDGVIVHWDVETGKSEKY, KRSKQVLALAVSADGRYLASGGLDRHIHLWDVRSREHIQA, GHRGAISCLSFGPDSSELFSGSFDRKIMQWNAEDRTYMNC, GHQNEVLTMDALSKDRLLTVARDRTMHLWKIPEESQLLF, PATASLECCCFIDDKEFLTGSDDGSVELWSIMRKKPTHI, SAQSWVSAIAARRGSDLAASGAANGSVRLWAIEPDSKGIR, and RLDG…QNGV.

The protein belongs to the WD repeat RRP9 family.

It is found in the nucleus. Its subcellular location is the nucleolus. Functionally, component of a nucleolar small nuclear ribonucleoprotein particle (snoRNP) thought to participate in the processing and modification of pre-ribosomal RNA. Essential for embryogenesis. In Oryza sativa subsp. japonica (Rice), this protein is U3 snoRNP-associated protein-like YAOH.